Consider the following 235-residue polypeptide: Sugar fermentation stimulation protein homolog (235 aa).

This sequence belongs to the SfsA family.

The sequence is that of Sugar fermentation stimulation protein homolog from Bartonella henselae (strain ATCC 49882 / DSM 28221 / CCUG 30454 / Houston 1) (Rochalimaea henselae).